The chain runs to 337 residues: Hsp90 co-chaperone Cdc37-like 1 (337 aa).

The segment covering M1 to W11 has biased composition (pro residues). Residues M1–G40 form a disordered region. Residues E2 to M171 are self-association. S32 and S88 each carry phosphoserine. Residues H84 to K122 adopt a coiled-coil conformation. A self-association and interaction with Hsp90 region spans residues K147–Q277. Residues K267–V337 form an interaction with Hsp70 region. Residues S278–V337 form a required for interaction with STIP1 region.

This sequence belongs to the CDC37 family. In terms of assembly, self-associates. Forms complexes with Hsp70 and Hsp90. Interacts with CDC37, FKBP4, PPID and STIP1. As to expression, expressed in brain, heart, kidney, liver, placenta and skeletal muscle.

It localises to the cytoplasm. Its function is as follows. Co-chaperone that binds to numerous proteins and promotes their interaction with Hsp70 and Hsp90. The sequence is that of Hsp90 co-chaperone Cdc37-like 1 (CDC37L1) from Homo sapiens (Human).